Reading from the N-terminus, the 1040-residue chain is MMSSVSTESKLQQAVSLQGVDPETCMIVFKNHWAQVVKILEKHDPLKNTQAKYGSIPPDEASAVQNYVEHMLFLLIEEQAKDAAMGPILEFVVSENIMEKLFLWSLRREFTDETKIEQLKMYEMLVTQSHQPLLHHKPILKPLMMLLSSCSGTTTPTVEEKLVVLLNQLCSILAKDPSILELFFHTSEDQGAANFLIFSLLIPFIHREGSVGQQARDALLFIMSLSAENTMVAHHIVENTYFCPVLATGLSGLYSSLPTKLEEKGEEWHCLLKDDWLLLPSLVQFMNSLEFCNAVIQVAHPLIRNQLVNYIYNGFLVPVLAPALHKVTVEEVMTTTAYLDLFLRSISEPALLEIFLRFILLHQHENVHILDTLTSRINTPFRLCVVSLALFRTLIGLHCEDVMLQLVLRYLIPCNHMMLSQRWAVKERDCYSVSAAKLLALTPVCCSSGITLTLGNQERDYILWSKCMHDTSGPVERPFPEAFSESACIVEYGKALDISYLQYLWEAHTNILRCMRDCRVWSALYDGDSPDPEMFLQSLTEEGSVSSACPVFGLPQQLPRKTGPQLAPRKDKSQTELEWDDSYDTGISSGADVGSPGPYDDLEVSGPPAPIDPPKHIQEMKKNALLLFKGSYIEESDFQDDVMVYRLCAEKDSEDMKDSQEEAARPPAEAQAEVQSVPINNGPLLSTQPETDSEEEWNRDNSDPFHSEPKEPKQEREPEAAPESNSELASPAPEAEHSSNLTAAHPESEELIAQYDQIIKELDSGAEGLMEQNYPTPDPLLLTKEEEGKEESKGEKEKEGKKELEDEEDDFDSFIAEMPAVETVPSPFVGRDEAAFASRHPVRTQSTPFTGPFISVVLSKLENMLENSLHVNLLLIGIITQLASYPQPLLRSFLLNTNMVFQPSVRSLYQVLASVKNKIEQFASVERDFPGLLIQAQQYLLFRVDMSDMTPAALTKDPIQEASRTGSGKNLLDGPPRVLQPFLTHRTKVAEAPPNLPLPVRNPMLAAALFPEFLKELAALAQEHSILCYKILGDFEDSCC.

3 disordered regions span residues 555 to 613, 653 to 746, and 769 to 808; these read PQQL…PIDP, SEDM…AAHP, and LMEQNYPTPDPLLLTKEEEGKEESKGEKEKEGKKELEDEE. The span at 653 to 664 shows a compositional bias: basic and acidic residues; sequence SEDMKDSQEEAA. Residues 677-690 are compositionally biased toward polar residues; sequence VPINNGPLLSTQPE. Composition is skewed to basic and acidic residues over residues 696–719 and 783–804; these read EWNRDNSDPFHSEPKEPKQEREPE and TKEEEGKEESKGEKEKEGKKEL.

The protein belongs to the FHIP family. As to quaternary structure, may be a component of the FTS/Hook/FHIP complex (FHF complex), composed of AKTIP/FTS, FHIP1B, and one or more members of the Hook family of proteins HOOK1, HOOK2, and HOOK3. May interact directly with AKTIP/FTS.

Its function is as follows. Probable component of the FTS/Hook/FHIP complex (FHF complex). FHF complex promotes the distribution of AP-4 complex to the perinuclear area of the cell. The protein is FHF complex subunit HOOK-interacting protein 1A of Homo sapiens (Human).